Consider the following 125-residue polypeptide: Inner membrane protein YbjM (125 aa).

Residues 1–6 are Cytoplasmic-facing; sequence MKHKQR. A helical membrane pass occupies residues 7–27; that stretch reads WAGAICCFVLFIVVCLFLATH. Residues 28–34 lie on the Periplasmic side of the membrane; it reads MKGAFRA. A helical membrane pass occupies residues 35 to 55; the sequence is AGHPEIGLLFFILPGAVASFF. Residues 56–64 lie on the Cytoplasmic side of the membrane; that stretch reads SQRREVLKP. A helical membrane pass occupies residues 65-85; that stretch reads LFGAMLAAPCSMLIMRLFFSP. The Periplasmic segment spans residues 86-92; sequence TRSFWQE. The helical transmembrane segment at 93 to 113 threads the bilayer; that stretch reads LAWLLSAVFWCALGALCFLFI. The Cytoplasmic segment spans residues 114–125; that stretch reads SSLFKPQHRKNQ.

The protein localises to the cell inner membrane. The chain is Inner membrane protein YbjM (ybjM) from Escherichia coli O157:H7.